A 718-amino-acid chain; its full sequence is DNA ligase (718 aa).

Residues 44–48 (DADYD), 93–94 (SL), and glutamate 127 each bind NAD(+). Residue lysine 129 is the N6-AMP-lysine intermediate of the active site. Residues arginine 150, glutamate 186, lysine 302, and lysine 326 each contribute to the NAD(+) site. Positions 432, 435, 456, and 462 each coordinate Zn(2+). In terms of domain architecture, BRCT spans 640–718 (TAGSPVAGKT…EDEWLALISG (79 aa)).

This sequence belongs to the NAD-dependent DNA ligase family. LigA subfamily. Requires Mg(2+) as cofactor. The cofactor is Mn(2+).

The catalysed reaction is NAD(+) + (deoxyribonucleotide)n-3'-hydroxyl + 5'-phospho-(deoxyribonucleotide)m = (deoxyribonucleotide)n+m + AMP + beta-nicotinamide D-nucleotide.. Functionally, DNA ligase that catalyzes the formation of phosphodiester linkages between 5'-phosphoryl and 3'-hydroxyl groups in double-stranded DNA using NAD as a coenzyme and as the energy source for the reaction. It is essential for DNA replication and repair of damaged DNA. The polypeptide is DNA ligase (Rhizobium etli (strain CIAT 652)).